The sequence spans 1126 residues: Translation initiation factor IF-2 (1126 aa).

The interval 63–519 (LSINKPSIKK…TTRQRQKRRA (457 aa)) is disordered. The span at 70–83 (IKKDNFKQNKEDKS) shows a compositional bias: basic and acidic residues. A compositionally biased stretch (low complexity) spans 93 to 111 (PLKNNSNKKPLLIKPLNKP). Positions 116–151 (KISNQLQNPNKPNIVNSSQSRANLTNTNSKPSQNFN) are enriched in polar residues. Pro residues predominate over residues 161–171 (TPPPIKSPAKP). Residues 181-195 (NINNNVKSSESSQNI) show a composition bias toward polar residues. Composition is skewed to low complexity over residues 211-224 (NTNKPKTKNFNNRK) and 240-252 (IINPNKQNNNKQN). A compositionally biased stretch (polar residues) spans 254 to 264 (AFKQTASNRPG). Low complexity-rich tracts occupy residues 291-315 (NRQGNPNRPGSPNRPGMPNRPGLRN) and 327-349 (NRQGNPNRPGSPNGPGMPNNRPG). A compositionally biased stretch (basic and acidic residues) spans 429–443 (GKTDWDDSAKLEALR). Positions 501–517 (KQFKKKKKETTRQRQKR) are enriched in basic residues. The tr-type G domain maps to 618-790 (RRPPVITVMG…ILLVSDVEDL (173 aa)). The interval 627–634 (GHVDHGKT) is G1. 627–634 (GHVDHGKT) serves as a coordination point for GTP. The interval 652-656 (GITQH) is G2. The G3 stretch occupies residues 677–680 (DTPG). Residues 677–681 (DTPGH) and 731–734 (NKID) each bind GTP. The G4 stretch occupies residues 731–734 (NKID). The segment at 767–769 (SAI) is G5.

Belongs to the TRAFAC class translation factor GTPase superfamily. Classic translation factor GTPase family. IF-2 subfamily.

The protein localises to the cytoplasm. One of the essential components for the initiation of protein synthesis. Protects formylmethionyl-tRNA from spontaneous hydrolysis and promotes its binding to the 30S ribosomal subunits. Also involved in the hydrolysis of GTP during the formation of the 70S ribosomal complex. This Prochlorococcus marinus (strain AS9601) protein is Translation initiation factor IF-2.